A 190-amino-acid polypeptide reads, in one-letter code: Thiamine biosynthesis protein X (190 aa).

An N-terminal signal peptide occupies residues 1-22; the sequence is MSISRTVFGIAATAALSAALVA. The N-palmitoyl cysteine moiety is linked to residue C23. The S-diacylglycerol cysteine moiety is linked to residue C23. A disordered region spans residues 43–68; the sequence is SQNPTSASSTSTSSATTTSSAPVEED. A compositionally biased stretch (low complexity) spans 47-63; that stretch reads TSASSTSTSSATTTSSA.

It localises to the cell membrane. Is necessary for biosynthesis of the 4-methyl-5-(beta-hydroxyethyl)thiazol component from which thiamine is formed. In Corynebacterium glutamicum (strain ATCC 13032 / DSM 20300 / JCM 1318 / BCRC 11384 / CCUG 27702 / LMG 3730 / NBRC 12168 / NCIMB 10025 / NRRL B-2784 / 534), this protein is Thiamine biosynthesis protein X (thiX).